The chain runs to 122 residues: MSITNEQILDAVAEMSVMQVVELIEAMEEKFGVTAAAAVVAGGAAGGEAAAEQTEFDVILESAGGNKVAVIKAVRGATGLGLKEAKALVDGAPAPLKEGVDKAEADALKAQLEEAGATVAVK.

It belongs to the bacterial ribosomal protein bL12 family. As to quaternary structure, homodimer. Part of the ribosomal stalk of the 50S ribosomal subunit. Forms a multimeric L10(L12)X complex, where L10 forms an elongated spine to which 2 to 4 L12 dimers bind in a sequential fashion. Binds GTP-bound translation factors.

Functionally, forms part of the ribosomal stalk which helps the ribosome interact with GTP-bound translation factors. Is thus essential for accurate translation. In Vibrio campbellii (strain ATCC BAA-1116), this protein is Large ribosomal subunit protein bL12.